The sequence spans 318 residues: Methionyl-tRNA formyltransferase (318 aa).

112–115 (SLLP) provides a ligand contact to (6S)-5,6,7,8-tetrahydrofolate.

This sequence belongs to the Fmt family.

It catalyses the reaction L-methionyl-tRNA(fMet) + (6R)-10-formyltetrahydrofolate = N-formyl-L-methionyl-tRNA(fMet) + (6S)-5,6,7,8-tetrahydrofolate + H(+). In terms of biological role, attaches a formyl group to the free amino group of methionyl-tRNA(fMet). The formyl group appears to play a dual role in the initiator identity of N-formylmethionyl-tRNA by promoting its recognition by IF2 and preventing the misappropriation of this tRNA by the elongation apparatus. In Mycobacterium leprae (strain Br4923), this protein is Methionyl-tRNA formyltransferase.